Here is a 326-residue protein sequence, read N- to C-terminus: MLKIEKQAKAIKITEVKESNYKGQFIVEPLYRGYGNTLGNALRRVLLSSIPGAAIKGMRIEGVLSEFTVMDGVKEAVTEIILNVKEIVVKAESSGERRMSLSIKGPKVVKAADIVADIGLEIVNPEQVICTVTTDRTLDIEFIVDTGEGFVVSEEIDKKDWPVDYIAVDAIYTPIRKVSYEIQDTMFGRMTDFDKLTLNVETDGSIEIRDALSYAVELLKLHLDPFLEIGNKMENLRDDIEEMIEEPMDIQVIDDKSHDMKIEELDLTVRSFNCLKKAGIEEVSQLASLSLNELLKIKNLGKKSLDEILEKMKDLGYDLEKNGSPE.

The alpha N-terminal domain (alpha-NTD) stretch occupies residues 1–230 (MLKIEKQAKA…LHLDPFLEIG (230 aa)). The segment at 249 to 326 (DIQVIDDKSH…YDLEKNGSPE (78 aa)) is alpha C-terminal domain (alpha-CTD).

It belongs to the RNA polymerase alpha chain family. In terms of assembly, homodimer. The RNAP catalytic core consists of 2 alpha, 1 beta, 1 beta' and 1 omega subunit. When a sigma factor is associated with the core the holoenzyme is formed, which can initiate transcription.

It catalyses the reaction RNA(n) + a ribonucleoside 5'-triphosphate = RNA(n+1) + diphosphate. Functionally, DNA-dependent RNA polymerase catalyzes the transcription of DNA into RNA using the four ribonucleoside triphosphates as substrates. The protein is DNA-directed RNA polymerase subunit alpha of Fusobacterium nucleatum subsp. nucleatum (strain ATCC 25586 / DSM 15643 / BCRC 10681 / CIP 101130 / JCM 8532 / KCTC 2640 / LMG 13131 / VPI 4355).